The following is a 271-amino-acid chain: Sulfur carrier protein FdhD (271 aa).

Residue Cys-114 is the Cysteine persulfide intermediate of the active site.

The protein belongs to the FdhD family.

Its subcellular location is the cytoplasm. Required for formate dehydrogenase (FDH) activity. Acts as a sulfur carrier protein that transfers sulfur from IscS to the molybdenum cofactor prior to its insertion into FDH. The chain is Sulfur carrier protein FdhD from Agrobacterium fabrum (strain C58 / ATCC 33970) (Agrobacterium tumefaciens (strain C58)).